We begin with the raw amino-acid sequence, 175 residues long: Adenylyl-sulfate kinase (175 aa).

Position 12-19 (12-19) interacts with ATP; it reads GLSGAGKT. The active-site Phosphoserine intermediate is serine 86.

It belongs to the APS kinase family.

It catalyses the reaction adenosine 5'-phosphosulfate + ATP = 3'-phosphoadenylyl sulfate + ADP + H(+). Its pathway is sulfur metabolism; hydrogen sulfide biosynthesis; sulfite from sulfate: step 2/3. Catalyzes the synthesis of activated sulfate. The polypeptide is Adenylyl-sulfate kinase (Synechococcus sp. (strain JA-2-3B'a(2-13)) (Cyanobacteria bacterium Yellowstone B-Prime)).